The sequence spans 644 residues: Karyogamy protein KAR9 (644 aa).

Phosphoserine is present on Ser-496. Disordered stretches follow at residues 506 to 534 and 606 to 644; these read SVPP…PDSF and PNSQ…TPTY. 2 stretches are compositionally biased toward basic and acidic residues: residues 523-534 and 634-644; these read SRGENEKSPDSF and REGRLDKTPTY.

It localises to the nucleus. Its subcellular location is the cytoplasm. It is found in the cytoskeleton. Functionally, involved in karyogamy. Component of a cortical adaptor complex that orients cytoplasmic microtubules. It may be involved in anchoring cytoplasmic microtubules to the cell cortex. The protein is Karyogamy protein KAR9 (KAR9) of Saccharomyces cerevisiae (strain ATCC 204508 / S288c) (Baker's yeast).